Here is a 219-residue protein sequence, read N- to C-terminus: Large ribosomal subunit protein uL1 (219 aa).

Belongs to the universal ribosomal protein uL1 family. In terms of assembly, part of the 50S ribosomal subunit.

Functionally, probably involved in E site tRNA release. Binds directly to 23S rRNA. Protein L1 is also a translational repressor protein, it controls the translation of its operon by binding to its mRNA. In Methanocaldococcus jannaschii (strain ATCC 43067 / DSM 2661 / JAL-1 / JCM 10045 / NBRC 100440) (Methanococcus jannaschii), this protein is Large ribosomal subunit protein uL1.